Here is a 249-residue protein sequence, read N- to C-terminus: Phosphoadenosine 5'-phosphosulfate reductase (249 aa).

The Nucleophile; cysteine thiosulfonate intermediate role is filled by Cys230.

It belongs to the PAPS reductase family. CysH subfamily.

The protein localises to the cytoplasm. The catalysed reaction is [thioredoxin]-disulfide + sulfite + adenosine 3',5'-bisphosphate + 2 H(+) = [thioredoxin]-dithiol + 3'-phosphoadenylyl sulfate. It functions in the pathway sulfur metabolism; hydrogen sulfide biosynthesis; sulfite from sulfate: step 3/3. Catalyzes the formation of sulfite from phosphoadenosine 5'-phosphosulfate (PAPS) using thioredoxin as an electron donor. The chain is Phosphoadenosine 5'-phosphosulfate reductase from Synechocystis sp. (strain ATCC 27184 / PCC 6803 / Kazusa).